A 495-amino-acid polypeptide reads, in one-letter code: UDP-glycosyltransferase 73E1 (495 aa).

UDP-alpha-D-glucose-binding positions include Ser299, 355 to 356 (WA), 373 to 381 (HCGWNSTIE), and 395 to 398 (FADQ).

The protein belongs to the UDP-glycosyltransferase family.

Functionally, may glycosylate diterpenes or flavonols in leaves. The sequence is that of UDP-glycosyltransferase 73E1 from Stevia rebaudiana (Stevia).